A 145-amino-acid polypeptide reads, in one-letter code: Maximins 3/H11 type 3 (145 aa).

Residues 1 to 18 form the signal peptide; sequence MNFKYIVAVSFLIASAYA. Propeptides lie at residues 19–43 and 75–122; these read RSVQ…LREI and TAEE…TKKE. Isoleucine 144 carries the isoleucine amide modification.

The protein belongs to the bombinin family. Expressed by the skin glands.

It is found in the secreted. Maximin-3 shows antibacterial activity against both Gram-positive and Gram-negative bacteria. It also shows antimicrobial activity against the fungus C.albicans, but not against A.flavus nor P.uticale. It has little hemolytic activity. It possess a significant cytotoxicity against tumor cell lines. It possess a significant anti-HIV activity. It shows high spermicidal activity. In terms of biological role, maximin-H11 shows antimicrobial activity against bacteria and against the fungus C.albicans. Shows strong hemolytic activity. The sequence is that of Maximins 3/H11 type 3 from Bombina maxima (Giant fire-bellied toad).